An 89-amino-acid chain; its full sequence is Small ribosomal subunit protein uS15 (89 aa).

The protein belongs to the universal ribosomal protein uS15 family. In terms of assembly, part of the 30S ribosomal subunit. Forms a bridge to the 50S subunit in the 70S ribosome, contacting the 23S rRNA.

One of the primary rRNA binding proteins, it binds directly to 16S rRNA where it helps nucleate assembly of the platform of the 30S subunit by binding and bridging several RNA helices of the 16S rRNA. Functionally, forms an intersubunit bridge (bridge B4) with the 23S rRNA of the 50S subunit in the ribosome. The sequence is that of Small ribosomal subunit protein uS15 from Shewanella putrefaciens (strain CN-32 / ATCC BAA-453).